The sequence spans 405 residues: Maintenance of mitochondrial morphology protein 1 (405 aa).

Residues methionine 1–glycine 86 lie on the Lumenal side of the membrane. The chain crosses the membrane as a helical span at residues leucine 87–phenylalanine 107. Residues alanine 108–histidine 405 are Cytoplasmic-facing. The 220-residue stretch at alanine 166–proline 385 folds into the SMP-LTD domain. The disordered stretch occupies residues serine 303–asparagine 324.

Belongs to the MMM1 family. In terms of assembly, homodimer. Component of the ER-mitochondria encounter structure (ERMES) or MDM complex, composed of MMM1, MDM10, MDM12 and MDM34. An MMM1 homodimer associates with one molecule of MDM12 on each side in a pairwise head-to-tail manner, and the SMP-LTD domains of MMM1 and MDM12 generate a continuous hydrophobic tunnel for phospholipid trafficking.

Its subcellular location is the endoplasmic reticulum membrane. Component of the ERMES/MDM complex, which serves as a molecular tether to connect the endoplasmic reticulum (ER) and mitochondria. Components of this complex are involved in the control of mitochondrial shape and protein biogenesis, and function in nonvesicular lipid trafficking between the ER and mitochondria. The MDM12-MMM1 subcomplex functions in the major beta-barrel assembly pathway that is responsible for biogenesis of all outer membrane beta-barrel proteins, and acts in a late step after the SAM complex. The MDM10-MDM12-MMM1 subcomplex further acts in the TOM40-specific pathway after the action of the MDM12-MMM1 complex. Essential for establishing and maintaining the structure of mitochondria and maintenance of mtDNA nucleoids. This chain is Maintenance of mitochondrial morphology protein 1, found in Meyerozyma guilliermondii (strain ATCC 6260 / CBS 566 / DSM 6381 / JCM 1539 / NBRC 10279 / NRRL Y-324) (Yeast).